A 309-amino-acid polypeptide reads, in one-letter code: Probable manganese-dependent inorganic pyrophosphatase (309 aa).

Residues histidine 9, aspartate 13, aspartate 15, aspartate 75, histidine 97, and aspartate 149 each contribute to the Mn(2+) site.

The protein belongs to the PPase class C family. The cofactor is Mn(2+).

It is found in the cytoplasm. It catalyses the reaction diphosphate + H2O = 2 phosphate + H(+). This Bacillus cereus (strain B4264) protein is Probable manganese-dependent inorganic pyrophosphatase.